Consider the following 207-residue polypeptide: ATP-dependent Clp protease proteolytic subunit (207 aa).

Serine 111 functions as the Nucleophile in the catalytic mechanism. Residue histidine 136 is part of the active site.

This sequence belongs to the peptidase S14 family. As to quaternary structure, fourteen ClpP subunits assemble into 2 heptameric rings which stack back to back to give a disk-like structure with a central cavity, resembling the structure of eukaryotic proteasomes.

The protein localises to the cytoplasm. The catalysed reaction is Hydrolysis of proteins to small peptides in the presence of ATP and magnesium. alpha-casein is the usual test substrate. In the absence of ATP, only oligopeptides shorter than five residues are hydrolyzed (such as succinyl-Leu-Tyr-|-NHMec, and Leu-Tyr-Leu-|-Tyr-Trp, in which cleavage of the -Tyr-|-Leu- and -Tyr-|-Trp bonds also occurs).. In terms of biological role, cleaves peptides in various proteins in a process that requires ATP hydrolysis. Has a chymotrypsin-like activity. Plays a major role in the degradation of misfolded proteins. The chain is ATP-dependent Clp protease proteolytic subunit from Psychromonas ingrahamii (strain DSM 17664 / CCUG 51855 / 37).